The primary structure comprises 510 residues: GMP synthase [glutamine-hydrolyzing] (510 aa).

Positions 5–195 (LVLVVDFGGQ…LFNVCNLKGD (191 aa)) constitute a Glutamine amidotransferase type-1 domain. C82 functions as the Nucleophile in the catalytic mechanism. Catalysis depends on residues H169 and E171. In terms of domain architecture, GMPS ATP-PPase spans 196-385 (WSMSSFAEQQ…LGIPHKLVWR (190 aa)). 223–229 (SGGVDSS) contacts ATP.

Homodimer.

It catalyses the reaction XMP + L-glutamine + ATP + H2O = GMP + L-glutamate + AMP + diphosphate + 2 H(+). The protein operates within purine metabolism; GMP biosynthesis; GMP from XMP (L-Gln route): step 1/1. Its function is as follows. Catalyzes the synthesis of GMP from XMP. In Clostridium botulinum (strain ATCC 19397 / Type A), this protein is GMP synthase [glutamine-hydrolyzing].